We begin with the raw amino-acid sequence, 343 residues long: Glycerol-3-phosphate dehydrogenase [NAD(P)+] (343 aa).

4 residues coordinate NADPH: Ser15, Phe16, Arg36, and Lys110. 2 residues coordinate sn-glycerol 3-phosphate: Lys110 and Gly138. Ala142 serves as a coordination point for NADPH. Lys193, Asp246, Ser256, Arg257, and Asn258 together coordinate sn-glycerol 3-phosphate. The active-site Proton acceptor is the Lys193. Arg257 contacts NADPH. An NADPH-binding site is contributed by Glu283.

It belongs to the NAD-dependent glycerol-3-phosphate dehydrogenase family.

Its subcellular location is the cytoplasm. The catalysed reaction is sn-glycerol 3-phosphate + NAD(+) = dihydroxyacetone phosphate + NADH + H(+). The enzyme catalyses sn-glycerol 3-phosphate + NADP(+) = dihydroxyacetone phosphate + NADPH + H(+). It functions in the pathway membrane lipid metabolism; glycerophospholipid metabolism. In terms of biological role, catalyzes the reduction of the glycolytic intermediate dihydroxyacetone phosphate (DHAP) to sn-glycerol 3-phosphate (G3P), the key precursor for phospholipid synthesis. This is Glycerol-3-phosphate dehydrogenase [NAD(P)+] from Alcanivorax borkumensis (strain ATCC 700651 / DSM 11573 / NCIMB 13689 / SK2).